Here is a 350-residue protein sequence, read N- to C-terminus: Phosphotriesterase-related protein (350 aa).

A divalent metal cation is bound by residues His-22, His-24, Glu-169, His-201, His-230, and Asp-298.

It belongs to the metallo-dependent hydrolases superfamily. Phosphotriesterase family. A divalent metal cation is required as a cofactor.

The chain is Phosphotriesterase-related protein from Drosophila erecta (Fruit fly).